A 720-amino-acid polypeptide reads, in one-letter code: Denticleless protein homolog (720 aa).

3 WD repeats span residues 43-85, 92-131, and 134-174; these read GMPV…TTKL, AHSN…LLGI, and GHQC…KDGF. The DDB1-binding motif motif lies at 164–167; the sequence is WDTR. Positions 193–200 match the Nuclear localization signal motif; it reads PSKLRKKR. WD repeat units lie at residues 211–250, 266–305, 310–351, and 355–395; these read DFQQ…AAYR, TRKL…TFPV, GHQN…LPPR, and GHSQ…EEEK. The DDB1-binding motif signature appears at 240–243; the sequence is WDLR. Disordered regions lie at residues 411 to 437, 476 to 495, 528 to 552, and 607 to 698; these read KPEE…VGSP, PAKL…PSSK, QSLL…KRRL, and NEHE…TSPK. Residues 528–542 are compositionally biased toward polar residues; sequence QSLLETSSTPKAQHS. Basic and acidic residues-rich tracts occupy residues 543–552 and 642–660; these read QAEKRAKRRL and CERD…ERKN.

The protein belongs to the WD repeat cdt2 family. Component of the DCX(DTL) E3 ubiquitin ligase complex, at least composed of CUL4 (CUL4A or CUL4B), DDB1, DTL/CDT2 and RBX1.

Its subcellular location is the nucleus. It localises to the cytoplasm. The protein resides in the cytoskeleton. The protein localises to the microtubule organizing center. It is found in the centrosome. Its subcellular location is the chromosome. The protein operates within protein modification; protein ubiquitination. Substrate-specific adapter of a DCX (DDB1-CUL4-X-box) E3 ubiquitin-protein ligase complex required for cell cycle control, DNA damage response and translesion DNA synthesis. The DCX(DTL) complex, also named CRL4(CDT2) complex, mediates the polyubiquitination and subsequent degradation of CDT1, CDKN1A/p21(CIP1), KMT5A and SDE2. CDT1 degradation in response to DNA damage is necessary to ensure proper cell cycle regulation of DNA replication. CDKN1A/p21(CIP1) degradation during S phase or following UV irradiation is essential to control replication licensing. KMT5A degradation is also important for a proper regulation of mechanisms such as TGF-beta signaling, cell cycle progression, DNA repair and cell migration. Most substrates require their interaction with PCNA for their polyubiquitination: substrates interact with PCNA via their PIP-box, and those containing the 'K+4' motif in the PIP box, recruit the DCX(DTL) complex, leading to their degradation. In undamaged proliferating cells, the DCX(DTL) complex also promotes the 'Lys-164' monoubiquitination of PCNA, thereby being involved in PCNA-dependent translesion DNA synthesis. May play a role in the regulation of the circadian clock. The protein is Denticleless protein homolog (DTL) of Gallus gallus (Chicken).